A 552-amino-acid polypeptide reads, in one-letter code: (R)-mandelonitrile lyase-like (552 aa).

An N-terminal signal peptide occupies residues 1–28 (MTKRIDSSLLYTALVVLLLLGVVHRSNA). N44 is a glycosylation site (N-linked (GlcNAc...) asparagine). Residue 55–82 (DYIIVGGGTAGCPLAATLSQSFRVLLLE) coordinates FAD. N-linked (GlcNAc...) asparagine glycans are attached at residues N162, N259, and N434. H492 functions as the Proton acceptor in the catalytic mechanism.

Belongs to the GMC oxidoreductase family. As to quaternary structure, monomer. It depends on FAD as a cofactor. In terms of processing, glycosylated.

It carries out the reaction (R)-mandelonitrile = benzaldehyde + hydrogen cyanide. This chain is (R)-mandelonitrile lyase-like, found in Arabidopsis thaliana (Mouse-ear cress).